The following is a 393-amino-acid chain: Lipid-A-disaccharide synthase (393 aa).

Belongs to the LpxB family.

It catalyses the reaction a lipid X + a UDP-2-N,3-O-bis[(3R)-3-hydroxyacyl]-alpha-D-glucosamine = a lipid A disaccharide + UDP + H(+). The protein operates within bacterial outer membrane biogenesis; LPS lipid A biosynthesis. In terms of biological role, condensation of UDP-2,3-diacylglucosamine and 2,3-diacylglucosamine-1-phosphate to form lipid A disaccharide, a precursor of lipid A, a phosphorylated glycolipid that anchors the lipopolysaccharide to the outer membrane of the cell. The protein is Lipid-A-disaccharide synthase of Granulibacter bethesdensis (strain ATCC BAA-1260 / CGDNIH1).